The following is a 133-amino-acid chain: MGMTDPIADMLTRIRNANRVHFKSVDVVYSGVNVNIAKVLKKTGYIGGYDVKKDEKGHDVLKVYLKYPDSKRTIINDIQRVSKPGRRVYVKGDEIPKVLNGYGVAIISTSKGVITDKEAREKSVGGEVLCKVW.

The protein belongs to the universal ribosomal protein uS8 family. In terms of assembly, part of the 30S ribosomal subunit. Contacts proteins S5 and S12.

Its function is as follows. One of the primary rRNA binding proteins, it binds directly to 16S rRNA central domain where it helps coordinate assembly of the platform of the 30S subunit. The sequence is that of Small ribosomal subunit protein uS8 from Syntrophus aciditrophicus (strain SB).